Consider the following 474-residue polypeptide: Peroxisome proliferator-activated receptor alpha (474 aa).

A DNA-binding region (nuclear receptor) is located at residues 106-180 (NLECRVCSDK…VGMSHNAIRF (75 aa)). 2 NR C4-type zinc fingers span residues 109-129 (CRVCSDKASGFHYGVHACEGC) and 146-168 (CERMCKIQKKNRNKCQYCRFEKC). Residues 245 to 472 (FVIHDMETLC…HPLLQEIYRD (228 aa)) enclose the NR LBD domain.

Belongs to the nuclear hormone receptor family. NR1 subfamily. Heterodimer with the retinoid X receptor. As to expression, ubiquitous.

The protein resides in the nucleus. Its function is as follows. Ligand-activated transcription factor. Key regulator of lipid metabolism. Activated by lipids. Receptor for peroxisome proliferators such as hypolipidemic drugs and fatty acids. Once activated by a ligand, the receptor binds to promoter elements of target genes. Regulates the peroxisomal beta-oxidation pathway of fatty acids. This is Peroxisome proliferator-activated receptor alpha (ppara) from Xenopus laevis (African clawed frog).